The chain runs to 121 residues: MASCLALRVALLLISGVLAPAVLTAEGPQEPDPTLWNEPIELPSGEGPLESTSHNQEFAVSGPPFPTSAPAPEDSTPPARVDQDGGSLGPGAIAAIVIAALLATCVVLALVVVALRKFSAS.

Positions 1–24 are cleaved as a signal peptide; sequence MASCLALRVALLLISGVLAPAVLT. Residues 25–92 lie on the Extracellular side of the membrane; the sequence is AEGPQEPDPT…QDGGSLGPGA (68 aa). Residues 26–84 are disordered; sequence EGPQEPDPTLWNEPIELPSGEGPLESTSHNQEFAVSGPPFPTSAPAPEDSTPPARVDQD. Residues 93–113 form a helical membrane-spanning segment; sequence IAAIVIAALLATCVVLALVVV. The Cytoplasmic segment spans residues 114–121; that stretch reads ALRKFSAS.

Interacts (via the extracellular domain) with FGF2. As to expression, expressed only in cartilage, including nasal, knee epiphyseal and rib tissues. In proliferation and hypertrophic chondrocytes, detected intracellulary and in the pericellular extracellular matrix. In primary spongiosa, detected only in the extracellular matrix.

It is found in the membrane. Its subcellular location is the cytoplasm. The protein resides in the secreted. It localises to the extracellular space. The protein localises to the extracellular matrix. Plays a role in the regulation of chondrocyte maturation and postnatal endochondral ossification. May inhibit cell growth stimulation induced by FGF2. The sequence is that of Protein SNORC from Mus musculus (Mouse).